A 488-amino-acid polypeptide reads, in one-letter code: Catalase (488 aa).

A disordered region spans residues 1-24 (MTDRRNLTTNQGVPIGDNQNSMTA). The segment covering 7-23 (LTTNQGVPIGDNQNSMT) has biased composition (polar residues). Residues histidine 55 and asparagine 128 contribute to the active site. Heme is bound at residue tyrosine 338.

This sequence belongs to the catalase family. Heme is required as a cofactor.

Its subcellular location is the cytoplasm. It carries out the reaction 2 H2O2 = O2 + 2 H2O. Its function is as follows. Decomposes hydrogen peroxide into water and oxygen; serves to protect cells from the toxic effects of hydrogen peroxide. The chain is Catalase (kat) from Listeria seeligeri.